A 192-amino-acid polypeptide reads, in one-letter code: Fe/S biogenesis protein NfuA (192 aa).

Residues C149 and C152 each contribute to the [4Fe-4S] cluster site.

Belongs to the NfuA family. As to quaternary structure, homodimer. It depends on [4Fe-4S] cluster as a cofactor.

Involved in iron-sulfur cluster biogenesis. Binds a 4Fe-4S cluster, can transfer this cluster to apoproteins, and thereby intervenes in the maturation of Fe/S proteins. Could also act as a scaffold/chaperone for damaged Fe/S proteins. This is Fe/S biogenesis protein NfuA from Proteus mirabilis (strain HI4320).